The primary structure comprises 774 residues: Transforming acidic coiled-coil-containing protein 1 (774 aa).

Position 2 is an N-acetylalanine (Ala2). The interval 2–56 (AFSPWQILSPVQWAKWTWSAVRGSGAGEDEAGGPEGDPEEEEDSQAETKSLSFSS) is interaction with LSM7 and SNRPG. A phosphoserine mark is found at Ser4, Ser10, and Ser45. A disordered region spans residues 21–142 (AVRGSGAGED…VKDVRGKAEH (122 aa)). The segment covering 28–46 (GEDEAGGPEGDPEEEEDSQ) has biased composition (acidic residues). Residues 48-61 (ETKSLSFSSDSEGN) show a composition bias toward polar residues. Positions 88–99 (PEAKPQESREAD) are enriched in basic and acidic residues. The segment covering 113-128 (DTCSRSSENEAPQATV) has biased composition (polar residues). Positions 131–142 (HPVKDVRGKAEH) are enriched in basic and acidic residues. Phosphoserine is present on residues Ser148 and Ser154. Residues 153–255 (FSIETRNCTD…PEMLMEGSPL (103 aa)) are interaction with TDRD7. Residues 207-424 (EAFTEASLKT…NNINTDDSGD (218 aa)) form an interaction with YEATS4 region. Residues 214–428 (LKTGGPCPEP…TDDSGDPCKP (215 aa)) are disordered. SPAZ domains lie at 216-294 (TGGP…TAGV) and 354-504 (SKPV…TDEE). Residue Ser228 is modified to Phosphoserine; by AURKC. Residues 228–241 (SKLRKPKPVSLRKK) are compositionally biased toward basic residues. A phosphoserine mark is found at Ser376 and Ser401. The segment covering 397 to 407 (ILQNSPPLSSK) has biased composition (polar residues). A Bipartite nuclear localization signal motif is present at residues 452–468 (PKKAKSRLITSGCKVKK). Ser480 and Ser560 each carry phosphoserine. Residues 579 to 774 (IREEIITKEI…ELIAKLGKTD (196 aa)) adopt a coiled-coil conformation. The tract at residues 670 to 774 (VLEGFKKNEE…ELIAKLGKTD (105 aa)) is interaction with CH-TOG.

This sequence belongs to the TACC family. As to quaternary structure, interacts with CH-TOG and YEATS4. Interacts with the AURKA and AURKB and AURKC. Interacts with LSM7, TDRD7 and SNRPG. Interacts with GCN5L2 and PCAF. Interacts with the thyroid hormone receptors THRB and THRA, predominantly with isoform alpha-2. The interaction with THRA isoform alpha-1 and THRB is decreased in the presence of thyroid hormone T3. Interacts with RARA in the nucleus. Also interacts with other nuclear receptors, including ESR1, NR3C1, PPARG and RXRA, preferentially in the absence of their hormonal ligands.

It localises to the cytoplasm. The protein resides in the nucleus. It is found in the cytoskeleton. The protein localises to the microtubule organizing center. Its subcellular location is the centrosome. It localises to the midbody. Functionally, involved in transcription regulation induced by nuclear receptors, including in T3 thyroid hormone and all-trans retinoic acid pathways. Might promote the nuclear localization of the receptors. Likely involved in the processes that promote cell division prior to the formation of differentiated tissues. This is Transforming acidic coiled-coil-containing protein 1 (Tacc1) from Mus musculus (Mouse).